A 215-amino-acid chain; its full sequence is MTTAVVFDYGFGNVRSMVRALANLGVDTTLTSDYRQSLEADGLVVPGVGAFAACMEGLKKVDGDRVIYDRIRAGRPVLGVCVGEQIMFEHGLEHGAHAAGIGLIGGSVNLLDADVVPHMGWDTIETAPDSVLLNGVENERFYFVHSYAAMEVKPADTSRFDIDLSDSPERVSWCSYGRSRFVAAYEHGPLSATQFHPEKSGDAGSQLLKNWIATL.

A Glutamine amidotransferase type-1 domain is found at 3-215 (TAVVFDYGFG…QLLKNWIATL (213 aa)). The active-site Nucleophile is the Cys-81. Active-site residues include His-196 and Glu-198.

As to quaternary structure, heterodimer of HisH and HisF.

The protein localises to the cytoplasm. It carries out the reaction 5-[(5-phospho-1-deoxy-D-ribulos-1-ylimino)methylamino]-1-(5-phospho-beta-D-ribosyl)imidazole-4-carboxamide + L-glutamine = D-erythro-1-(imidazol-4-yl)glycerol 3-phosphate + 5-amino-1-(5-phospho-beta-D-ribosyl)imidazole-4-carboxamide + L-glutamate + H(+). The enzyme catalyses L-glutamine + H2O = L-glutamate + NH4(+). It participates in amino-acid biosynthesis; L-histidine biosynthesis; L-histidine from 5-phospho-alpha-D-ribose 1-diphosphate: step 5/9. Functionally, IGPS catalyzes the conversion of PRFAR and glutamine to IGP, AICAR and glutamate. The HisH subunit catalyzes the hydrolysis of glutamine to glutamate and ammonia as part of the synthesis of IGP and AICAR. The resulting ammonia molecule is channeled to the active site of HisF. In Bifidobacterium longum (strain NCC 2705), this protein is Imidazole glycerol phosphate synthase subunit HisH.